A 343-amino-acid chain; its full sequence is ELAV-like protein 3 (343 aa).

3 consecutive RRM domains span residues 35–113, 121–202, and 260–338; these read TNLI…YARP, ANLY…FANN, and WCIF…FKTS.

This sequence belongs to the RRM elav family.

In terms of biological role, RNA-binding protein that binds to AU-rich sequences (AREs) of target mRNAs. May also bind poly-A tracts via RRM 3. May be involved in neuronal differentiation and maintenance. The chain is ELAV-like protein 3 from Xenopus tropicalis (Western clawed frog).